Here is a 236-residue protein sequence, read N- to C-terminus: Auxin-responsive protein IAA16 (236 aa).

Positions 9-13 (LRLGL) match the EAR-like (transcriptional repression) motif. The segment at 82–110 (KNVMSGQKPTTGDATEGNDKTSGSSGATS) is disordered. Polar residues predominate over residues 85–94 (MSGQKPTTGD). One can recognise a PB1 domain in the interval 118-218 (VAYVKVSMDG…SCKRIRIMKG (101 aa)).

It belongs to the Aux/IAA family. In terms of assembly, homodimers and heterodimers.

The protein resides in the nucleus. In terms of biological role, aux/IAA proteins are short-lived transcriptional factors that function as repressors of early auxin response genes at low auxin concentrations. Repression is thought to result from the interaction with auxin response factors (ARFs), proteins that bind to the auxin-responsive promoter element (AuxRE). Formation of heterodimers with ARF proteins may alter their ability to modulate early auxin response genes expression. The polypeptide is Auxin-responsive protein IAA16 (IAA16) (Arabidopsis thaliana (Mouse-ear cress)).